The following is a 349-amino-acid chain: Phenylalanine--tRNA ligase alpha subunit (349 aa).

Glu-264 is a Mg(2+) binding site.

Belongs to the class-II aminoacyl-tRNA synthetase family. Phe-tRNA synthetase alpha subunit type 1 subfamily. Tetramer of two alpha and two beta subunits. Mg(2+) serves as cofactor.

It localises to the cytoplasm. It catalyses the reaction tRNA(Phe) + L-phenylalanine + ATP = L-phenylalanyl-tRNA(Phe) + AMP + diphosphate + H(+). In Myxococcus xanthus (strain DK1622), this protein is Phenylalanine--tRNA ligase alpha subunit.